Consider the following 70-residue polypeptide: ATP synthase subunit c (70 aa).

The next 2 membrane-spanning stretches (helical) occupy residues 1–21 (MNFL…SYGN) and 47–67 (FIGV…SFLI).

This sequence belongs to the ATPase C chain family. As to quaternary structure, F-type ATPases have 2 components, F(1) - the catalytic core - and F(0) - the membrane proton channel. F(1) has five subunits: alpha(3), beta(3), gamma(1), delta(1), epsilon(1). F(0) has three main subunits: a(1), b(2) and c(10-14). The alpha and beta chains form an alternating ring which encloses part of the gamma chain. F(1) is attached to F(0) by a central stalk formed by the gamma and epsilon chains, while a peripheral stalk is formed by the delta and b chains.

The protein localises to the cell membrane. Its function is as follows. F(1)F(0) ATP synthase produces ATP from ADP in the presence of a proton or sodium gradient. F-type ATPases consist of two structural domains, F(1) containing the extramembraneous catalytic core and F(0) containing the membrane proton channel, linked together by a central stalk and a peripheral stalk. During catalysis, ATP synthesis in the catalytic domain of F(1) is coupled via a rotary mechanism of the central stalk subunits to proton translocation. In terms of biological role, key component of the F(0) channel; it plays a direct role in translocation across the membrane. A homomeric c-ring of between 10-14 subunits forms the central stalk rotor element with the F(1) delta and epsilon subunits. The chain is ATP synthase subunit c from Latilactobacillus sakei subsp. sakei (strain 23K) (Lactobacillus sakei subsp. sakei).